The following is a 348-amino-acid chain: GTPase Obg (348 aa).

The Obg domain maps to 1–159 (MKFLDQAKIY…KTIILRLKLI (159 aa)). In terms of domain architecture, OBG-type G spans 160–327 (ADAGLVGLPN…VLRLAADEIW (168 aa)). Residues 166-173 (GLPNAGKS), 191-195 (FTTLT), 212-215 (DIPG), 279-282 (NKMD), and 308-310 (SGV) contribute to the GTP site. Residues serine 173 and threonine 193 each coordinate Mg(2+).

The protein belongs to the TRAFAC class OBG-HflX-like GTPase superfamily. OBG GTPase family. Monomer. Mg(2+) is required as a cofactor.

The protein localises to the cytoplasm. In terms of biological role, an essential GTPase which binds GTP, GDP and possibly (p)ppGpp with moderate affinity, with high nucleotide exchange rates and a fairly low GTP hydrolysis rate. Plays a role in control of the cell cycle, stress response, ribosome biogenesis and in those bacteria that undergo differentiation, in morphogenesis control. The polypeptide is GTPase Obg (Parvibaculum lavamentivorans (strain DS-1 / DSM 13023 / NCIMB 13966)).